The chain runs to 859 residues: DNA mismatch repair protein MutS (859 aa).

622–629 (GPNMGGKS) contacts ATP.

Belongs to the DNA mismatch repair MutS family.

In terms of biological role, this protein is involved in the repair of mismatches in DNA. It is possible that it carries out the mismatch recognition step. This protein has a weak ATPase activity. The sequence is that of DNA mismatch repair protein MutS from Coxiella burnetii (strain RSA 493 / Nine Mile phase I).